The sequence spans 59 residues: Large ribosomal subunit protein bL32 (59 aa).

Basic residues predominate over residues 1-20; sequence MAVPKKKTSKGKRNQRHATW. A disordered region spans residues 1–22; it reads MAVPKKKTSKGKRNQRHATWKG.

This sequence belongs to the bacterial ribosomal protein bL32 family.

This chain is Large ribosomal subunit protein bL32, found in Prochlorococcus marinus (strain NATL1A).